Consider the following 370-residue polypeptide: Homospermidine synthase 2 (370 aa).

It belongs to the deoxyhypusine synthase family. As to quaternary structure, homotetramer. Requires NAD(+) as cofactor. Post-translationally, the N-terminus is blocked. In terms of tissue distribution, expressed in roots.

It carries out the reaction putrescine + spermidine = sym-homospermidine + propane-1,3-diamine. Its pathway is alkaloid biosynthesis; pyrrolizidine alkaloid biosynthesis. Catalyzes the transfer of an aminobutyl unit from spermidine onto putrescine. The resulting polyamine homospermidine is a precursor in the biosynthesis of pyrrolizidine alkaloids. The protein is Homospermidine synthase 2 of Senecio vernalis (Spring groundsel).